A 791-amino-acid polypeptide reads, in one-letter code: AP-1 complex subunit gamma-like 2 (791 aa).

A GAE domain is found at 671–786; it reads APIPSVRVFE…QEIFEVDNLP (116 aa).

It belongs to the adaptor complexes large subunit family. In terms of assembly, may interact with AP1S1/Sigma1A-adaptin and AP1S2/Sigma1B-adaptin. Probably does not interact with APB1. Interacts (via GAE domain) with RABEP1, NECAP1, CLINT1 and AFTPH/aftiphilin. Interacts with HBV major surface antigen L. Interacts with HBV core protein C in a ubiquitin-dependent manner. Binds ubiquitin. In terms of tissue distribution, widely expressed.

It is found in the golgi apparatus membrane. It localises to the cytoplasmic vesicle membrane. Its subcellular location is the endosome membrane. Functionally, may function in protein sorting in late endosomes or multivesucular bodies (MVBs). Involved in MVB-assisted maturation of hepatitis B virus (HBV). The sequence is that of AP-1 complex subunit gamma-like 2 (Ap1g2) from Mus musculus (Mouse).